The primary structure comprises 227 residues: 2,3-bisphosphoglycerate-dependent phosphoglycerate mutase (227 aa).

Substrate is bound by residues 7–14 (RHGFSEWN), 20–21 (TG), R59, 86–89 (ERHY), K97, 113–114 (RR), and 182–183 (GN). H8 functions as the Tele-phosphohistidine intermediate in the catalytic mechanism. E86 serves as the catalytic Proton donor/acceptor.

It belongs to the phosphoglycerate mutase family. BPG-dependent PGAM subfamily. In terms of assembly, homodimer.

It carries out the reaction (2R)-2-phosphoglycerate = (2R)-3-phosphoglycerate. It participates in carbohydrate degradation; glycolysis; pyruvate from D-glyceraldehyde 3-phosphate: step 3/5. In terms of biological role, catalyzes the interconversion of 2-phosphoglycerate and 3-phosphoglycerate. The chain is 2,3-bisphosphoglycerate-dependent phosphoglycerate mutase from Glaesserella parasuis serovar 5 (strain SH0165) (Haemophilus parasuis).